A 62-amino-acid chain; its full sequence is Photosystem II reaction center protein Z (62 aa).

A run of 2 helical transmembrane segments spans residues 8 to 28 and 41 to 61; these read LVLLLIALSTVLVVGVPVVLA and YTGAGLWTGLVIVTSLVNSLV.

It belongs to the PsbZ family. As to quaternary structure, PSII is composed of 1 copy each of membrane proteins PsbA, PsbB, PsbC, PsbD, PsbE, PsbF, PsbH, PsbI, PsbJ, PsbK, PsbL, PsbM, PsbT, PsbX, PsbY, PsbZ, Psb30/Ycf12, at least 3 peripheral proteins of the oxygen-evolving complex and a large number of cofactors. It forms dimeric complexes.

The protein localises to the plastid. Its subcellular location is the chloroplast thylakoid membrane. May control the interaction of photosystem II (PSII) cores with the light-harvesting antenna, regulates electron flow through the 2 photosystem reaction centers. PSII is a light-driven water plastoquinone oxidoreductase, using light energy to abstract electrons from H(2)O, generating a proton gradient subsequently used for ATP formation. This chain is Photosystem II reaction center protein Z, found in Pyropia yezoensis (Susabi-nori).